The sequence spans 485 residues: NADH-quinone oxidoreductase subunit N (485 aa).

Transmembrane regions (helical) follow at residues 8–28 (LIAL…MLSI), 35–55 (FLNA…LWFV), 71–91 (GFAM…CTFA), 105–125 (FYLL…ANHL), 127–147 (SLFL…GYAF), 159–179 (YTIL…LVYA), 203–223 (LLAG…LVPF), 235–255 (PAPV…GVVM), 271–291 (VVLA…ALSQ), 297–317 (LLGY…IALQ), 326–346 (VGVY…VVSL), 373–393 (AAVM…LGFI), 408–430 (WWLV…RVAV), and 455–475 (IVVL…QPLI).

It belongs to the complex I subunit 2 family. In terms of assembly, NDH-1 is composed of 13 different subunits. Subunits NuoA, H, J, K, L, M, N constitute the membrane sector of the complex.

It localises to the cell inner membrane. It carries out the reaction a quinone + NADH + 5 H(+)(in) = a quinol + NAD(+) + 4 H(+)(out). Its function is as follows. NDH-1 shuttles electrons from NADH, via FMN and iron-sulfur (Fe-S) centers, to quinones in the respiratory chain. The immediate electron acceptor for the enzyme in this species is believed to be ubiquinone. Couples the redox reaction to proton translocation (for every two electrons transferred, four hydrogen ions are translocated across the cytoplasmic membrane), and thus conserves the redox energy in a proton gradient. The chain is NADH-quinone oxidoreductase subunit N from Escherichia coli (strain ATCC 8739 / DSM 1576 / NBRC 3972 / NCIMB 8545 / WDCM 00012 / Crooks).